Consider the following 681-residue polypeptide: Phenylalanine--tRNA ligase beta subunit (681 aa).

One can recognise a B5 domain in the interval 288 to 363; that stretch reads PARETVLLRP…RIHGYDQIPE (76 aa). 4 residues coordinate Mg(2+): Asp341, Asp347, Glu350, and Glu351. Residues 586-681 enclose the FDX-ACB domain; it reads SSFPSIQRDL…EKQLEAVLLR (96 aa).

This sequence belongs to the phenylalanyl-tRNA synthetase beta subunit family. Type 1 subfamily. Tetramer of two alpha and two beta subunits. Requires Mg(2+) as cofactor.

Its subcellular location is the cytoplasm. It carries out the reaction tRNA(Phe) + L-phenylalanine + ATP = L-phenylalanyl-tRNA(Phe) + AMP + diphosphate + H(+). This chain is Phenylalanine--tRNA ligase beta subunit, found in Rhodopirellula baltica (strain DSM 10527 / NCIMB 13988 / SH1).